Here is a 108-residue protein sequence, read N- to C-terminus: Large ribosomal subunit protein bL31B (108 aa).

A disordered region spans residues 81-108 (KPAQPVQAPAEEGPVVKGKKKAPAKKKK). Residues 97–108 (KGKKKAPAKKKK) show a composition bias toward basic residues.

Belongs to the bacterial ribosomal protein bL31 family. Type B subfamily. As to quaternary structure, part of the 50S ribosomal subunit.

In Chlamydia caviae (strain ATCC VR-813 / DSM 19441 / 03DC25 / GPIC) (Chlamydophila caviae), this protein is Large ribosomal subunit protein bL31B.